The following is a 509-amino-acid chain: Ribonuclease Y (509 aa).

Residues 5–25 traverse the membrane as a helical segment; that stretch reads IAGVSGIAGAAVGAGACYLWL. Positions 199 to 265 constitute a KH domain; it reads LINLVNLPSD…TRVIEILIED (67 aa). The 94-residue stretch at 325–418 folds into the HD domain; sequence ALAHTLEVAK…VCAADTLSAA (94 aa).

The protein belongs to the RNase Y family.

Its subcellular location is the cell membrane. In terms of biological role, endoribonuclease that initiates mRNA decay. The sequence is that of Ribonuclease Y from Sulfurovum sp. (strain NBC37-1).